Here is a 235-residue protein sequence, read N- to C-terminus: 2-C-methyl-D-erythritol 4-phosphate cytidylyltransferase (235 aa).

Belongs to the IspD/TarI cytidylyltransferase family. IspD subfamily. Homodimer.

The catalysed reaction is 2-C-methyl-D-erythritol 4-phosphate + CTP + H(+) = 4-CDP-2-C-methyl-D-erythritol + diphosphate. It functions in the pathway isoprenoid biosynthesis; isopentenyl diphosphate biosynthesis via DXP pathway; isopentenyl diphosphate from 1-deoxy-D-xylulose 5-phosphate: step 2/6. Its function is as follows. Catalyzes the formation of 4-diphosphocytidyl-2-C-methyl-D-erythritol from CTP and 2-C-methyl-D-erythritol 4-phosphate (MEP). In Serratia proteamaculans (strain 568), this protein is 2-C-methyl-D-erythritol 4-phosphate cytidylyltransferase.